The sequence spans 481 residues: Small ribosomal subunit protein bS1 (481 aa).

4 S1 motif domains span residues 36–105 (GDIV…LSKK), 123–188 (DEAV…LSRR), 209–277 (GTIR…LSLK), and 294–363 (GQIV…LSLK). A disordered region spans residues 429–467 (TAQMEKFAAAEAAGRGADDQSSASSAPSEKTAGGSLASD). Residues 437 to 456 (AAEAAGRGADDQSSASSAPS) show a composition bias toward low complexity.

It belongs to the bacterial ribosomal protein bS1 family.

Functionally, binds mRNA; thus facilitating recognition of the initiation point. It is needed to translate mRNA with a short Shine-Dalgarno (SD) purine-rich sequence. This chain is Small ribosomal subunit protein bS1 (rpsA), found in Mycobacterium tuberculosis (strain CDC 1551 / Oshkosh).